A 45-amino-acid polypeptide reads, in one-letter code: Globin, minor monomeric component (45 aa).

The Globin domain occupies 1 to 45 (GLSAAERQVVASCWKDIAGADXGAGVGKEXLIKFISAAPEMAAVF).

It belongs to the globin family. As to quaternary structure, monomer.

In Glycera dibranchiata (Bloodworm), this protein is Globin, minor monomeric component.